The following is a 58-amino-acid chain: SPbeta prophage-derived uncharacterized protein YonT (58 aa).

A helical membrane pass occupies residues 6 to 26; that stretch reads GIVVAFLISLTVLTINSLTIV. Residues 35–58 are disordered; that stretch reads GTSKKKKRIRKRLRPKRQRQRIRR. Basic residues predominate over residues 36–58; sequence TSKKKKRIRKRLRPKRQRQRIRR.

The protein localises to the cell membrane. The chain is SPbeta prophage-derived uncharacterized protein YonT (yonT) from Bacillus subtilis (strain 168).